Consider the following 1663-residue polypeptide: Cortactin-binding protein 2 (1663 aa).

Disordered stretches follow at residues 1-23 (MATDGASCEPDLSRAPEDAAGAA), 203-222 (KKKTNELEEELSTEKRRSTE), 352-440 (ARPG…LHPG), 454-478 (GNANDPDQNGNTTQSPPSRDVSPTS), and 498-616 (RFTS…PKPS). The stretch at 119-276 (KKMQERMSAQ…EQLKRGSDSK (158 aa)) forms a coiled coil. Low complexity predominate over residues 384–396 (NGPSTGSTPDPTS). Polar residues predominate over residues 411 to 422 (QTPGIAPQNSQA). Arginine 498 bears the Asymmetric dimethylarginine mark. Residues 583–593 (TVASPPSSLPQ) are compositionally biased toward polar residues. ANK repeat units follow at residues 709 to 739 (GRPTLLQQAAAQGNVTLLSMLLNEEGLDINY), 743 to 772 (DGHSALYSAAKNGHTDCVRLLLSAEAQVNA), 776 to 805 (NGFTPLCAAAAQGHFECVELLIAYDANINH), 809 to 838 (GGQTPLYLACKNGNKECIKLLLEAGTNRSV), and 842 to 871 (DGWTPVHAAVDTGNVDSLKLLMYHRILARG). The interval 876 to 897 (EEGSESSVFDLDGGEESPEGIS) is disordered. The ANK 6 repeat unit spans residues 912–942 (EGWTAAHIAASKGFKNCLEILCRHGGLEPER). A disordered region spans residues 1446 to 1485 (NKKKGESGAWRKVNTSPRRKSGRFSLPTWNKPDLSTEGMK). Serine 1524 carries the phosphoserine modification. Disordered stretches follow at residues 1580–1602 (SQKEVSPLSSHQTTECSNSKSKT) and 1615–1663 (VPRS…KPNK). The span at 1582 to 1599 (KEVSPLSSHQTTECSNSK) shows a compositional bias: polar residues. Low complexity predominate over residues 1624 to 1638 (SQNTKRSSSSSNTRQ). Basic and acidic residues predominate over residues 1645 to 1663 (SKEENWNLHKNEHLEKPNK).

In terms of assembly, interacts with CTTN/cortactin SH3 domain. Interacts with STRN, STRN4/zinedin and MOB4/phocein; this interactions mediate the association with the STRIPAK core complex and may regulate dendritic spine distribution of the STRIPAK complex in hippocampal neurons. Activation of glutamate receptors weakens the interaction with STRN and STRN4.

The protein localises to the cytoplasm. It localises to the cell cortex. The protein resides in the cell projection. It is found in the dendritic spine. Its function is as follows. Regulates the dendritic spine distribution of CTTN/cortactin in hippocampal neurons, and thus controls dendritic spinogenesis and dendritic spine maintenance. Associates with the striatin-interacting phosphatase and kinase (STRIPAK) core complex to regulate dendritic spine distribution of the STRIPAK complex in hippocampal neurons. The polypeptide is Cortactin-binding protein 2 (CTTNBP2) (Nomascus leucogenys (Northern white-cheeked gibbon)).